Here is a 248-residue protein sequence, read N- to C-terminus: MVRYKATISYDGTLFSGFQRQPNARSIQEEIEKTLLRLNSGTPVTVHGAGRTDAGVHAYGQVIHFDLPQERDPEKLRFGLDTQCPDDIDIVSIELVSEEFHARYSKHIKTYEFLVDAGRPKNPMMRNYAIHYPYPLSLALMQEAAMELVGTHDFTGFTASGTSVENKVRTITQASVSIDEKTGFYVFAFSGNGFLYKQVRNMVGTLLKIGNGRMPVSQVKTVLESRDRNLAGPTVAGNGLYLKEIRYE.

Aspartate 53 acts as the Nucleophile in catalysis. Residue tyrosine 111 participates in substrate binding.

It belongs to the tRNA pseudouridine synthase TruA family. Homodimer.

It catalyses the reaction uridine(38/39/40) in tRNA = pseudouridine(38/39/40) in tRNA. Its function is as follows. Formation of pseudouridine at positions 38, 39 and 40 in the anticodon stem and loop of transfer RNAs. The polypeptide is tRNA pseudouridine synthase A (Streptococcus thermophilus (strain CNRZ 1066)).